The sequence spans 450 residues: Biotin carboxylase 1 (450 aa).

The region spanning 1–447 is the Biotin carboxylation domain; it reads MIKKLLIANR…NTKFLETYDV (447 aa). ATP contacts are provided by residues Lys116, Lys158, 164–165, 200–203, and His208; these read GG and EKYI. The ATP-grasp domain maps to 120 to 318; sequence RETMKQAGVP…LIKEQIKVAS (199 aa). Lys237 contributes to the hydrogencarbonate binding site. Positions 275 and 289 each coordinate ATP. Mg(2+) is bound by residues Glu275, Glu289, and Asn291. Glu275, Glu289, and Asn291 together coordinate Mn(2+). Residues Arg293, Val296, and Arg339 each coordinate hydrogencarbonate. Residue Arg293 is part of the active site. Arg339 is a biotin binding site.

As to quaternary structure, acetyl-CoA carboxylase is a heterohexamer of biotin carboxyl carrier protein, biotin carboxylase and the two subunits of carboxyl transferase in a 2:2 complex. Requires Mg(2+) as cofactor. Mn(2+) serves as cofactor.

It catalyses the reaction N(6)-biotinyl-L-lysyl-[protein] + hydrogencarbonate + ATP = N(6)-carboxybiotinyl-L-lysyl-[protein] + ADP + phosphate + H(+). The protein operates within lipid metabolism; malonyl-CoA biosynthesis; malonyl-CoA from acetyl-CoA: step 1/1. Its function is as follows. This protein is a component of the acetyl coenzyme A carboxylase complex; first, biotin carboxylase catalyzes the carboxylation of the carrier protein and then the transcarboxylase transfers the carboxyl group to form malonyl-CoA. This chain is Biotin carboxylase 1 (accC1), found in Bacillus subtilis (strain 168).